The chain runs to 207 residues: Large ribosomal subunit protein bL17m (207 aa).

Basic and acidic residues predominate over residues Glu173–Pro200. The tract at residues Glu173–Ile207 is disordered.

Belongs to the bacterial ribosomal protein bL17 family. In terms of assembly, component of the mitochondrial large ribosomal subunit (mt-LSU). Mature yeast 74S mitochondrial ribosomes consist of a small (37S) and a large (54S) subunit. The 37S small subunit contains a 15S ribosomal RNA (15S mt-rRNA) and at least 32 different proteins. The 54S large subunit contains a 21S rRNA (21S mt-rRNA) and at least 45 different proteins.

Its subcellular location is the mitochondrion. In terms of biological role, component of the mitochondrial ribosome (mitoribosome), a dedicated translation machinery responsible for the synthesis of mitochondrial genome-encoded proteins, including at least some of the essential transmembrane subunits of the mitochondrial respiratory chain. The mitoribosomes are attached to the mitochondrial inner membrane and translation products are cotranslationally integrated into the membrane. This is Large ribosomal subunit protein bL17m (mrpl8) from Schizosaccharomyces pombe (strain 972 / ATCC 24843) (Fission yeast).